Here is a 204-residue protein sequence, read N- to C-terminus: MRIILASSSPRRRQLMELLGIEFEVEKPDVEEEFLESPEETVRELSLRKAEWVFKKRKEEEILVIGSDTVVVLDGNILGKPESLEEAKGMLKKLSGKWHVVYTGVAFVSSETKDVIVSSTKVRFRELPESVIDYYVEKYRPLDKAGAYGIQDFAAVFVEKIEGDFFTVVGFPLGMVWQYLYEKGWWKVASKREDDKGGARVAFG.

D68 acts as the Proton acceptor in catalysis.

The protein belongs to the Maf family. YhdE subfamily. A divalent metal cation is required as a cofactor.

It localises to the cytoplasm. The catalysed reaction is dTTP + H2O = dTMP + diphosphate + H(+). It catalyses the reaction UTP + H2O = UMP + diphosphate + H(+). Nucleoside triphosphate pyrophosphatase that hydrolyzes dTTP and UTP. May have a dual role in cell division arrest and in preventing the incorporation of modified nucleotides into cellular nucleic acids. The protein is dTTP/UTP pyrophosphatase of Thermotoga maritima (strain ATCC 43589 / DSM 3109 / JCM 10099 / NBRC 100826 / MSB8).